Consider the following 145-residue polypeptide: Allergen MAG29 (145 aa).

2 disordered regions span residues 1–21 (KDDI…DDKQ) and 103–145 (AGGA…EEVD). The segment covering 104–137 (GGAGAGGMPGGFPGGFPGTDGSGGGAAGGDGGKS) has biased composition (gly residues).

The protein belongs to the heat shock protein 70 family.

In Dermatophagoides farinae (American house dust mite), this protein is Allergen MAG29 (MAG29).